The chain runs to 362 residues: Ribosomal RNA large subunit methyltransferase F (362 aa).

Residues 1 to 28 are compositionally biased toward basic residues; it reads MNTPLKPKHGQKTNRKPKANKPVVKKQQ. Positions 1-40 are disordered; sequence MNTPLKPKHGQKTNRKPKANKPVVKKQQTKQPPTHKVQGE.

The protein belongs to the methyltransferase superfamily. METTL16/RlmF family.

It is found in the cytoplasm. The catalysed reaction is adenosine(1618) in 23S rRNA + S-adenosyl-L-methionine = N(6)-methyladenosine(1618) in 23S rRNA + S-adenosyl-L-homocysteine + H(+). Specifically methylates the adenine in position 1618 of 23S rRNA. The protein is Ribosomal RNA large subunit methyltransferase F of Vibrio cholerae serotype O1 (strain M66-2).